The sequence spans 353 residues: Palmitoyltransferase SWF1 (353 aa).

A topological domain (lumenal) is located at residue M1. The helical transmembrane segment at 2–22 threads the bilayer; it reads LFTLIVCLTIISSLATFLLLF. Residues 23-61 are Cytoplasmic-facing; it reads GDSPSFRNTPIQKLRNSLLSISRDIFQFYHWLDEKLNGQ. A helical transmembrane segment spans residues 62–82; that stretch reads LLKILNWLVPVGYVMVVTVCF. Over 83–100 the chain is Lumenal; the sequence is QQFLTHTLPMLSSPGLFR. Residues 101–121 traverse the membrane as a helical segment; that stretch reads LFTIYFSMVLIYASTILAAFS. The Cytoplasmic segment spans residues 122–190; that stretch reads DPGRITTINL…NNCVGYYNYK (69 aa). The DHHC domain occupies 147 to 197; sequence KTCSTCHIAKPARSKHCSVCNQCFLLYDHHCVWINNCVGYYNYKWFMLFLI. C177 serves as the catalytic S-palmitoyl cysteine intermediate. Residues 191-211 form a helical membrane-spanning segment; sequence WFMLFLISNINMLGYGGWLCY. Residues 212-233 lie on the Lumenal side of the membrane; that stretch reads WALTPVSWRKITSTNNANKVTG. A helical membrane pass occupies residues 234–254; the sequence is IFLILCSIFIVITTLFTFLHL. The Cytoplasmic portion of the chain corresponds to 255–353; sequence RYIYLGVTTN…WNNLIERLKW (99 aa).

The protein belongs to the DHHC palmitoyltransferase family. SWF1 subfamily.

It localises to the endoplasmic reticulum membrane. It catalyses the reaction L-cysteinyl-[protein] + hexadecanoyl-CoA = S-hexadecanoyl-L-cysteinyl-[protein] + CoA. In terms of biological role, palmitoyltransferase that targets several endosomal SNAREs. Palmitoylates the SNAREs at cysteine residues close to the cytoplasmic end of their transmembrane domain. May have a role in the cellular quality control of transmembrane domain-containing proteins. The chain is Palmitoyltransferase SWF1 (SWF1) from Candida albicans (strain SC5314 / ATCC MYA-2876) (Yeast).